We begin with the raw amino-acid sequence, 246 residues long: MAGHSKWANTRHRKAAQDAKRGKIFTKIIRELVTAAKLGGGDPDANPRLRAAVDKALSNNMTRDTLNRAIARGVGGDDDANMETIIYEGYGPGGTAVMVECLSDNRNRTVAEVRHAFSKCGGNLGTDGSVAYLFSKKGVISFEQGDEDTIMEAALEAGAEDVVTFDDGAIDVYTAWEEMGKVRDALEAAGLKADNAEVSMIPSTKADMDAETAPKLMRLIDMLEDCDDVQEVYHNGEISDEVAATL.

Positions 1–20 (MAGHSKWANTRHRKAAQDAK) are disordered.

The protein belongs to the TACO1 family.

It is found in the cytoplasm. The chain is Probable transcriptional regulatory protein CKO_01097 from Citrobacter koseri (strain ATCC BAA-895 / CDC 4225-83 / SGSC4696).